Consider the following 383-residue polypeptide: Agmatine deiminase (383 aa).

Agmatine contacts are provided by D220 and D226. The active-site Amidino-cysteine intermediate is C366.

It belongs to the agmatine deiminase family. Forms homodimers.

The enzyme catalyses agmatine + H2O = N-carbamoylputrescine + NH4(+). Its pathway is amine and polyamine biosynthesis; putrescine biosynthesis via agmatine pathway; N-carbamoylputrescine from agmatine: step 1/1. Inhibited by N-ethylmaleimide and iodoacetamide. Its function is as follows. Mediates the hydrolysis of agmatine into N-carbamoylputrescine in the arginine decarboxylase (ADC) pathway of putrescine biosynthesis, a basic polyamine. In Arabidopsis thaliana (Mouse-ear cress), this protein is Agmatine deiminase (AIH).